Here is a 364-residue protein sequence, read N- to C-terminus: Ribosomal RNA large subunit methyltransferase M (364 aa).

S-adenosyl-L-methionine is bound by residues Ser198, 231–234 (APGG), Asp250, Asp270, and Asp286. Lys315 acts as the Proton acceptor in catalysis.

Belongs to the class I-like SAM-binding methyltransferase superfamily. RNA methyltransferase RlmE family. RlmM subfamily. Monomer.

It is found in the cytoplasm. It catalyses the reaction cytidine(2498) in 23S rRNA + S-adenosyl-L-methionine = 2'-O-methylcytidine(2498) in 23S rRNA + S-adenosyl-L-homocysteine + H(+). Functionally, catalyzes the 2'-O-methylation at nucleotide C2498 in 23S rRNA. This is Ribosomal RNA large subunit methyltransferase M from Azoarcus sp. (strain BH72).